The sequence spans 563 residues: Inclusion membrane protein M (563 aa).

The Cytoplasmic portion of the chain corresponds to 1–36 (MVYFRAHQPRHTPKTFPLEVHHSFSDKHPQIAKAMR). The chain crosses the membrane as a helical span at residues 37–57 (ITGIALAALSLLAVVACVIAV). S58 is a topological domain (vacuolar). A helical transmembrane segment spans residues 59–79 (AGGAAIPLAVISGIAVMSGLL). The Cytoplasmic portion of the chain corresponds to 80–252 (SAATIICSAK…VLKVALSLGV (173 aa)). The helical transmembrane segment at 253 to 273 (LAGVAALIIFLPPSLPFIAVI) threads the bilayer. Residue G274 is a topological domain, vacuolar. The chain crosses the membrane as a helical span at residues 275–295 (VSSLALGMASFLMIRGIKYLL). Over 296-563 (EHSPLNRKQL…QLAQYLLDNH (268 aa)) the chain is Cytoplasmic.

Belongs to the chlamydial CPn_0065/CT_288/TC_0561 family. In terms of assembly, interacts with host CCDC146. In host cells infected with C.trachomatis incM, CCDC146 is recruited to the periphery of the pathogen-containing vacuole but recruitment is not dependent on incM.

Its subcellular location is the host vacuole. The protein resides in the host pathogen-containing vacuole. It localises to the host pathogen-containing vacuole membrane. It is found in the host pathogen-containing vacuole lumen. The protein localises to the secreted. Functionally, interferes with host cell cytokinesis, centrosome positioning and Golgi distribution, and contributes to the morphology and stability of the pathogen-containing vacuole. May exert its effects by acting directly or indirectly on host microtubules. The polypeptide is Inclusion membrane protein M (Chlamydia trachomatis serovar D (strain ATCC VR-885 / DSM 19411 / UW-3/Cx)).